Consider the following 161-residue polypeptide: Nucleotide-binding protein Dtpsy_2240 (161 aa).

This sequence belongs to the YajQ family.

Functionally, nucleotide-binding protein. This chain is Nucleotide-binding protein Dtpsy_2240, found in Acidovorax ebreus (strain TPSY) (Diaphorobacter sp. (strain TPSY)).